The chain runs to 540 residues: Probable pectinesterase/pectinesterase inhibitor 60 (540 aa).

Positions 1 to 31 (MNIMMVQNISFLSLHLLLILLLCLRPLTTVA) are cleaved as a signal peptide. Residues 32–185 (DGNSTNIDGW…SHLISNCLAV (154 aa)) form a pectinesterase inhibitor 60 region. Residues asparagine 34, asparagine 91, asparagine 95, asparagine 120, asparagine 161, and asparagine 195 are each glycosylated (N-linked (GlcNAc...) asparagine). Residues 225–526 (NLVVAKDGSG…FSVGKFIAGT (302 aa)) form a pectinesterase 60 region. The substrate site is built by threonine 302 and glutamine 332. Aspartate 355 (proton donor; for pectinesterase activity) is an active-site residue. Residues cysteine 369 and cysteine 389 are joined by a disulfide bond. Aspartate 376 serves as the catalytic Nucleophile; for pectinesterase activity. The substrate site is built by arginine 444 and tryptophan 446.

In the N-terminal section; belongs to the PMEI family. This sequence in the C-terminal section; belongs to the pectinesterase family. As to expression, expressed in siliques.

Its subcellular location is the secreted. The protein resides in the cell wall. The enzyme catalyses [(1-&gt;4)-alpha-D-galacturonosyl methyl ester](n) + n H2O = [(1-&gt;4)-alpha-D-galacturonosyl](n) + n methanol + n H(+). It functions in the pathway glycan metabolism; pectin degradation; 2-dehydro-3-deoxy-D-gluconate from pectin: step 1/5. Its function is as follows. Acts in the modification of cell walls via demethylesterification of cell wall pectin. The protein is Probable pectinesterase/pectinesterase inhibitor 60 (PME60) of Arabidopsis thaliana (Mouse-ear cress).